Here is a 4749-residue protein sequence, read N- to C-terminus: Dynein heavy chain domain-containing protein 1 (4749 aa).

The segment covering Met-1–Ser-18 has biased composition (low complexity). Disordered stretches follow at residues Met-1–Pro-27, Glu-275–Ser-308, and Glu-2690–Ser-2785. Positions Cys-2696–Ala-2716 are enriched in acidic residues. Polar residues predominate over residues Gln-2738–Ser-2749. Residues Cys-3197 to Gln-3224 adopt a coiled-coil conformation. Residues Pro-3568–Ser-3667 form a disordered region. The segment covering Ser-3578–Ser-3593 has biased composition (basic and acidic residues). The stretch at Gly-3594–Glu-3636 forms a coiled coil. The segment covering Asp-3595–Ala-3612 has biased composition (acidic residues). The segment covering Asn-3613–Gly-3628 has biased composition (basic and acidic residues). Residues Glu-3644–Glu-3655 show a composition bias toward low complexity. Polar residues predominate over residues Thr-3656–Ser-3667. Coiled-coil stretches lie at residues Met-3818–Gln-3838 and Glu-4431–Leu-4451.

This sequence belongs to the dynein heavy chain family. As to expression, expressed in spermatozoa (at protein level).

The protein resides in the cell projection. The protein localises to the cilium. It localises to the flagellum. Its function is as follows. Essential for the normal function of sperm flagella axonemes. The polypeptide is Dynein heavy chain domain-containing protein 1 (Dnhd1) (Mus musculus (Mouse)).